A 92-amino-acid chain; its full sequence is Conotoxin Cal22f (92 aa).

The signal sequence occupies residues 1-24 (MMSTKGITLFLCLLLLALATSVNG). Positions 25–44 (GQGTRRSRMTRALHGGRPSA) are excised as a propeptide.

Post-translationally, contains 4 disulfide bonds. As to expression, expressed by the venom duct.

The protein resides in the secreted. Probable neurotoxin with unknown target. Possibly targets ion channels. This is Conotoxin Cal22f from Californiconus californicus (California cone).